A 617-amino-acid polypeptide reads, in one-letter code: Protein kinase STUNTED (617 aa).

The tract at residues 162–187 (SSELSEGFSDKDLAKTTGQEKRKISG) is disordered. Basic and acidic residues predominate over residues 169–184 (FSDKDLAKTTGQEKRK). The Protein kinase domain maps to 277–555 (FSLENLIGKG…RGEDDVSKWV (279 aa)). Residues 283–291 (IGKGGCNEV) and K305 each bind ATP. At Y350 the chain carries Phosphotyrosine. D399 serves as the catalytic Proton acceptor. S403 carries the post-translational modification Phosphoserine. T439 carries the post-translational modification Phosphothreonine. A Phosphotyrosine modification is found at Y447. Residues 590 to 617 (DSVSNSSLERSNNSLFSSSSSSSQELQS) form a disordered region. Low complexity predominate over residues 591–617 (SVSNSSLERSNNSLFSSSSSSSQELQS).

It belongs to the protein kinase superfamily. Ser/Thr protein kinase family. As to expression, expressed ubiquitously, mostly in roots, to a lower extent in leaves, floral buds and stems, and, at low levels, in flowers and siliques.

Its subcellular location is the cytoplasm. Its function is as follows. Promotes cell proliferation in the gibberellic acid (GA) signaling pathway, acting downstream of RGA, and possibly through a negative regulation of two cyclin-dependent kinase inhibitors SIM and SMR1. The polypeptide is Protein kinase STUNTED (Arabidopsis thaliana (Mouse-ear cress)).